A 598-amino-acid polypeptide reads, in one-letter code: DNA mismatch repair protein MutL (598 aa).

Belongs to the DNA mismatch repair MutL/HexB family.

Its function is as follows. This protein is involved in the repair of mismatches in DNA. It is required for dam-dependent methyl-directed DNA mismatch repair. May act as a 'molecular matchmaker', a protein that promotes the formation of a stable complex between two or more DNA-binding proteins in an ATP-dependent manner without itself being part of a final effector complex. In Thiobacillus denitrificans (strain ATCC 25259 / T1), this protein is DNA mismatch repair protein MutL.